The chain runs to 598 residues: Elongation factor 4 (598 aa).

The tr-type G domain maps to 2–183 (KHIRNFCIIA…AIIEKIPHPK (182 aa)). GTP contacts are provided by residues 14-19 (DHGKST) and 130-133 (NKVD).

This sequence belongs to the TRAFAC class translation factor GTPase superfamily. Classic translation factor GTPase family. LepA subfamily.

It localises to the cell inner membrane. The enzyme catalyses GTP + H2O = GDP + phosphate + H(+). In terms of biological role, required for accurate and efficient protein synthesis under certain stress conditions. May act as a fidelity factor of the translation reaction, by catalyzing a one-codon backward translocation of tRNAs on improperly translocated ribosomes. Back-translocation proceeds from a post-translocation (POST) complex to a pre-translocation (PRE) complex, thus giving elongation factor G a second chance to translocate the tRNAs correctly. Binds to ribosomes in a GTP-dependent manner. The protein is Elongation factor 4 of Flavobacterium psychrophilum (strain ATCC 49511 / DSM 21280 / CIP 103535 / JIP02/86).